A 617-amino-acid chain; its full sequence is UvrABC system protein C (617 aa).

Residues 11–85 (TTPGVYIFRK…IKQHRPHYNV (75 aa)) form the GIY-YIG domain. Residues 194-229 (APVIARLKEDMKVAAQGQDFEQAARLRDRVQAVEKL) form the UVR domain.

Belongs to the UvrC family. In terms of assembly, interacts with UvrB in an incision complex.

It is found in the cytoplasm. In terms of biological role, the UvrABC repair system catalyzes the recognition and processing of DNA lesions. UvrC both incises the 5' and 3' sides of the lesion. The N-terminal half is responsible for the 3' incision and the C-terminal half is responsible for the 5' incision. This chain is UvrABC system protein C, found in Deinococcus radiodurans (strain ATCC 13939 / DSM 20539 / JCM 16871 / CCUG 27074 / LMG 4051 / NBRC 15346 / NCIMB 9279 / VKM B-1422 / R1).